The primary structure comprises 277 residues: Release factor glutamine methyltransferase (277 aa).

Residues 117-121 (GTGTG), Asp140, Trp168, and Asn183 each bind S-adenosyl-L-methionine. 183-186 (NPPY) is a binding site for substrate.

Belongs to the protein N5-glutamine methyltransferase family. PrmC subfamily.

The enzyme catalyses L-glutaminyl-[peptide chain release factor] + S-adenosyl-L-methionine = N(5)-methyl-L-glutaminyl-[peptide chain release factor] + S-adenosyl-L-homocysteine + H(+). Functionally, methylates the class 1 translation termination release factors RF1/PrfA and RF2/PrfB on the glutamine residue of the universally conserved GGQ motif. The polypeptide is Release factor glutamine methyltransferase (Shigella dysenteriae serotype 1 (strain Sd197)).